The primary structure comprises 548 residues: Synaptic vesicle 2-related protein (548 aa).

At 1-87 (MEDDLFQLRH…GFGKFQWKLS (87 aa)) the chain is on the cytoplasmic side. The helical transmembrane segment at 88-108 (MLTGLAWMADAMEMMILSILA) threads the bilayer. The Vesicular portion of the chain corresponds to 109–119 (PQLHCEWRLPS). The helical transmembrane segment at 120–140 (WQVALLTSVVFIGMMASSSLW) threads the bilayer. Over 141-156 (GNVSDQYGRRTGLKIS) the chain is Cytoplasmic. The chain crosses the membrane as a helical span at residues 157–177 (VIWTLYYGILSAFAPVYSWIL). Residues 178 to 180 (VLR) are Vesicular-facing. The chain crosses the membrane as a helical span at residues 181 to 201 (GLVGFGIGGVPQSVTLYAEFL). Residues 202 to 209 (PMKSRAKC) are Cytoplasmic-facing. The helical transmembrane segment at 210–230 (ILLIEIFWALGTVFEVLLAIF) threads the bilayer. The Vesicular portion of the chain corresponds to 231-238 (VMPTLGWR). Residues 239–259 (WLLILSALPLMLFAILCFWLP) traverse the membrane as a helical segment. Topologically, residues 260–316 (ESARYEVLSGNQEKALATLKRIATENGAPMPLGKLIVSRQEDRGKIRDLFSPQFRCT) are cytoplasmic. A helical transmembrane segment spans residues 317 to 337 (TLLLWFIWFSNAFSYYGLVLL). Topologically, residues 338–373 (TTELFQAGDVCSISNQRKAVKPKCSLACEYLTVEDY) are vesicular. Residues 374 to 394 (TDLLWTTLSEFPGLLVTLWII) form a helical membrane-spanning segment. The Cytoplasmic portion of the chain corresponds to 395 to 401 (DRVGRKK). A helical transmembrane segment spans residues 402–422 (TMAICFIIFSFSALLLFLCVG). The Vesicular segment spans residues 423–424 (RN). A helical transmembrane segment spans residues 425-445 (VLTVFLFIARAFISGGFQAAY). Residues 446–457 (VYTPEVYPTATR) lie on the Cytoplasmic side of the membrane. The chain crosses the membrane as a helical span at residues 458–478 (ALGLGTCSGMARVGALITPFI). Over 479–486 (AQVMLESS) the chain is Vesicular. A helical membrane pass occupies residues 487–507 (IYLTVLVYSGCCVLAAVASCF). Topologically, residues 508 to 548 (LPIETKGRGLQESSHREWGQEMVGRGTHNVGATPSHSGSQE) are cytoplasmic. Residues 519-548 (ESSHREWGQEMVGRGTHNVGATPSHSGSQE) form a disordered region. Polar residues predominate over residues 537-548 (VGATPSHSGSQE).

This sequence belongs to the major facilitator superfamily. As to expression, detected in embryonic trigeminal ganglion and spinal cord.

Its subcellular location is the cytoplasmic vesicle. It is found in the secretory vesicle. The protein resides in the synaptic vesicle membrane. The polypeptide is Synaptic vesicle 2-related protein (svop) (Xenopus laevis (African clawed frog)).